We begin with the raw amino-acid sequence, 181 residues long: 30 kDa heat shock protein (181 aa).

One can recognise a sHSP domain in the interval 33-181; the sequence is ASVQSFAPRF…PPTAKKITIQ (149 aa). The segment covering 79-115 has biased composition (basic and acidic residues); the sequence is GRSEREYHSSSDDNKNDQADTENQARGESSEVAKTGE. Residues 79–127 form a disordered region; sequence GRSEREYHSSSDDNKNDQADTENQARGESSEVAKTGEKQVSTKKAANKS.

The protein belongs to the small heat shock protein (HSP20) family.

The polypeptide is 30 kDa heat shock protein (hsp30) (Emericella nidulans (strain FGSC A4 / ATCC 38163 / CBS 112.46 / NRRL 194 / M139) (Aspergillus nidulans)).